Reading from the N-terminus, the 275-residue chain is Elongation factor Ts (275 aa).

Residues 76-79 (TDFV) form an involved in Mg(2+) ion dislocation from EF-Tu region.

The protein belongs to the EF-Ts family.

Its subcellular location is the cytoplasm. Associates with the EF-Tu.GDP complex and induces the exchange of GDP to GTP. It remains bound to the aminoacyl-tRNA.EF-Tu.GTP complex up to the GTP hydrolysis stage on the ribosome. This chain is Elongation factor Ts, found in Corynebacterium glutamicum (strain ATCC 13032 / DSM 20300 / JCM 1318 / BCRC 11384 / CCUG 27702 / LMG 3730 / NBRC 12168 / NCIMB 10025 / NRRL B-2784 / 534).